A 1210-amino-acid polypeptide reads, in one-letter code: Adenine-specific methyltransferase PglX (1210 aa).

Residues 1181-1194 (KQGEHGLTDDDLRG) show a composition bias toward basic and acidic residues. A disordered region spans residues 1181-1210 (KQGEHGLTDDDLRGWRPPAATRRRRAAAKQ). Basic residues predominate over residues 1201–1210 (TRRRRAAAKQ).

This sequence belongs to the methyltransferase superfamily. PglX adenine methyltransferase family.

It carries out the reaction a 2'-deoxyadenosine in DNA + S-adenosyl-L-methionine = an N(6)-methyl-2'-deoxyadenosine in DNA + S-adenosyl-L-homocysteine + H(+). BREX systems (bacteriophage exclusion) provide immunity against bacteriophage. Part of a type 2 BREX system. Probably a DNA methyltransferase, it methylates phage DNA in vitro in an S-adenosyl-L-methionine-dependent manner. Previously called the phage growth limitation (Pgl) system, it confers protection against bacteriophage phiC31. The bacteria allows one cycle of phage infection, but subsequent cycles are impaired, protecting the original bacterial colony. The system undergoes high rates (10(-3) to 10(-4)) of phase reversion, i.e. loss and regain of phiC31 resistance. When the pglW-pglX-pglY-pglZ genes are transformed into a susceptible S.lividans (strain 1326) they confer resistance to infection by phage phiC31 and phiBT1; all 4 genes are necessary. In terms of biological role, probably a toxic component of a type II toxin-antitoxin (TA) system. The toxic activity is inhibited by its cognate antitoxin PglZ. Functionally, may be a subtypes G and alpha restriction enzyme that recognizes and cleaves an unknown sequence. Methylates an adenine residue in the same sequence. The protein is Adenine-specific methyltransferase PglX of Streptomyces coelicolor (strain ATCC BAA-471 / A3(2) / M145).